The following is a 355-amino-acid chain: Green-sensitive opsin-1 (355 aa).

Topologically, residues 1 to 49 (MAAHADEPVFAARRYNEETTRESAFVYTNANNTRDPFEGPNYHIAPRWV) are extracellular. Asparagine 31 carries an N-linked (GlcNAc...) asparagine glycan. The chain crosses the membrane as a helical span at residues 50–74 (YNLASLWMIIVVIASIFTNSLVIVA). At 75 to 86 (TAKFKKLRHPLN) the chain is on the cytoplasmic side. A helical transmembrane segment spans residues 87–112 (WILVNLAIADLGETVLASTISVFNQV). Residues 113-126 (FGYFVLGHPMCIFE) lie on the Extracellular side of the membrane. Cysteine 123 and cysteine 200 are oxidised to a cystine. A helical membrane pass occupies residues 127–146 (GWTVSVCGITALWSLTIISW). The Cytoplasmic segment spans residues 147–165 (ERWVVVCKPFGNVKFDGKW). A helical membrane pass occupies residues 166–189 (AAGGIIFAWTWAIIWCTPPIFGWS). Over 190 to 215 (RYWPHGLKTSCGPDVFSGSEDPGVAS) the chain is Extracellular. A helical transmembrane segment spans residues 216–243 (YMVTLLLTCCILPLSVIIICYIFVWNAI). The Cytoplasmic segment spans residues 244–265 (HQVAQQQKDSESTQKAEKEVSR). Residues 266–289 (MVVVMILAFILCWGPYASFATFSA) traverse the membrane as a helical segment. Over 290 to 297 (LNPGYAWH) the chain is Extracellular. A helical membrane pass occupies residues 298–322 (PLAAALPAYFAKSATIYNPIIYVFM). Lysine 309 carries the N6-(retinylidene)lysine modification. Over 323-355 (NRQFRSCIMQLFGKKVEDASEVSGSTTEVSTAS) the chain is Cytoplasmic.

This sequence belongs to the G-protein coupled receptor 1 family. Opsin subfamily. The color pigments are found in the cone photoreceptor cells.

The protein localises to the membrane. In terms of biological role, visual pigments are the light-absorbing molecules that mediate vision. They consist of an apoprotein, opsin, covalently linked to cis-retinal. The protein is Green-sensitive opsin-1 (G103) of Psalidodon fasciatus (Banded astyanax).